Consider the following 110-residue polypeptide: uncharacterized protein (110 aa).

May play a regulatory role in sulfomenaquinone (SMK) biosynthesis. This is an uncharacterized protein from Mycobacterium bovis (strain ATCC BAA-935 / AF2122/97).